The primary structure comprises 139 residues: Heat shock protein homolog C338.06c (139 aa).

A sHSP domain is found at 27–139 (AWLSCWGPAL…EFTTRIVEIQ (113 aa)).

The protein belongs to the small heat shock protein (HSP20) family.

It is found in the mitochondrion. This chain is Heat shock protein homolog C338.06c, found in Schizosaccharomyces pombe (strain 972 / ATCC 24843) (Fission yeast).